The following is a 296-amino-acid chain: GTPase Era (296 aa).

The Era-type G domain maps to Lys-3 to Glu-170. The segment at Gly-11 to Ser-18 is G1. A GTP-binding site is contributed by Gly-11–Ser-18. Residues Gln-37–Asn-41 are G2. Residues Asp-58 to Gly-61 form a G3 region. Residues Asp-58–Ile-62 and Asn-120–Asp-123 each bind GTP. Positions Asn-120–Asp-123 are G4. Positions Ile-149 to Ala-151 are G5. Residues Leu-201 to Lys-278 enclose the KH type-2 domain.

The protein belongs to the TRAFAC class TrmE-Era-EngA-EngB-Septin-like GTPase superfamily. Era GTPase family. Monomer.

It is found in the cytoplasm. Its subcellular location is the cell membrane. In terms of biological role, an essential GTPase that binds both GDP and GTP, with rapid nucleotide exchange. Plays a role in 16S rRNA processing and 30S ribosomal subunit biogenesis and possibly also in cell cycle regulation and energy metabolism. The sequence is that of GTPase Era from Clostridium perfringens (strain ATCC 13124 / DSM 756 / JCM 1290 / NCIMB 6125 / NCTC 8237 / Type A).